Reading from the N-terminus, the 394-residue chain is Succinate--CoA ligase [ADP-forming] subunit beta 1 (394 aa).

The region spanning 9–237 (RDLFAKHDVP…KAAANPLEAA (229 aa)) is the ATP-grasp domain. ATP is bound by residues K45, 52–54 (GRG), E92, P95, and E100. N192 and D206 together coordinate Mg(2+). Substrate contacts are provided by residues N257 and 319 to 321 (GIT).

This sequence belongs to the succinate/malate CoA ligase beta subunit family. Heterotetramer of two alpha and two beta subunits. It depends on Mg(2+) as a cofactor.

The catalysed reaction is succinate + ATP + CoA = succinyl-CoA + ADP + phosphate. It carries out the reaction GTP + succinate + CoA = succinyl-CoA + GDP + phosphate. Its pathway is carbohydrate metabolism; tricarboxylic acid cycle; succinate from succinyl-CoA (ligase route): step 1/1. Succinyl-CoA synthetase functions in the citric acid cycle (TCA), coupling the hydrolysis of succinyl-CoA to the synthesis of either ATP or GTP and thus represents the only step of substrate-level phosphorylation in the TCA. The beta subunit provides nucleotide specificity of the enzyme and binds the substrate succinate, while the binding sites for coenzyme A and phosphate are found in the alpha subunit. In Streptomyces coelicolor (strain ATCC BAA-471 / A3(2) / M145), this protein is Succinate--CoA ligase [ADP-forming] subunit beta 1.